The chain runs to 58 residues: Large ribosomal subunit protein bL32 (58 aa).

This sequence belongs to the bacterial ribosomal protein bL32 family.

In Ligilactobacillus salivarius (strain UCC118) (Lactobacillus salivarius), this protein is Large ribosomal subunit protein bL32.